We begin with the raw amino-acid sequence, 585 residues long: Neopullulanase 2 (585 aa).

Asn143, Asp145, Asn148, Asp149, Gly169, and Asp171 together coordinate Ca(2+). Residues His244 and Arg323 each coordinate substrate. The active-site Nucleophile is the Asp325. Glu354 serves as the catalytic Proton donor. Substrate contacts are provided by residues 420 to 421 (HD), Asp465, and Arg469.

This sequence belongs to the glycosyl hydrolase 13 family. As to quaternary structure, monomer. Ca(2+) is required as a cofactor.

The enzyme catalyses Hydrolysis of pullulan to panose (6-alpha-D-glucosylmaltose).. Hydrolyzes pullulan efficiently but only a small amount of starch. Endohydrolysis of 1,4-alpha-glucosidic linkages in pullulan to form panose. Also cleaves (1-6)-alpha-glucosidic linkages to form maltotriose. This chain is Neopullulanase 2 (tvaII), found in Thermoactinomyces vulgaris.